Here is a 229-residue protein sequence, read N- to C-terminus: tRNA (guanine-N(7)-)-methyltransferase (229 aa).

S-adenosyl-L-methionine-binding residues include Glu-62, Glu-87, Asp-114, and Asp-137. Asp-137 is an active-site residue. Lys-141 is a substrate binding site. Residues 143–148 are interaction with RNA; it reads KHNKRR. Residues Asp-173 and 208 to 211 each bind substrate; that span reads TKFE.

This sequence belongs to the class I-like SAM-binding methyltransferase superfamily. TrmB family.

The catalysed reaction is guanosine(46) in tRNA + S-adenosyl-L-methionine = N(7)-methylguanosine(46) in tRNA + S-adenosyl-L-homocysteine. It functions in the pathway tRNA modification; N(7)-methylguanine-tRNA biosynthesis. Catalyzes the formation of N(7)-methylguanine at position 46 (m7G46) in tRNA. The chain is tRNA (guanine-N(7)-)-methyltransferase from Francisella tularensis subsp. novicida (strain U112).